The following is a 1506-amino-acid chain: Phosphatidylinositol 3-kinase C2 domain-containing subunit gamma (1506 aa).

The interval 1–34 (MAYSWQTEPNRTEPQEDGSDTQQFHHTNQHLSSR) is disordered. Positions 20 to 34 (DTQQFHHTNQHLSSR) are enriched in polar residues. The region spanning 285-371 (DTKFRVKISI…IQLHLQKNRD (87 aa)) is the PI3K-RBD domain. One can recognise a C2 PI3K-type domain in the interval 541-689 (LQSHLSFTVC…SPLTLQIDFP (149 aa)). The region spanning 704–880 (RTDHEEPPRE…QELLAALQFC (177 aa)) is the PIK helical domain. The 279-residue stretch at 949 to 1227 (DRDACSYFTS…KIKESLECFP (279 aa)) folds into the PI3K/PI4K catalytic domain. The segment at 955 to 961 (YFTSNAS) is G-loop. The segment at 1091–1099 (GVCDRHNDN) is catalytic loop. The activation loop stretch occupies residues 1110 to 1136 (HIDFGKFLGHAQTFGGIKRDRAPFIFT). The 113-residue stretch at 1260–1372 (LNKTRTIQRV…SFFLSEHIQP (113 aa)) folds into the PX domain. In terms of domain architecture, C2 spans 1381–1506 (DPGENSLDKS…KWYPLGNSII (126 aa)).

Belongs to the PI3/PI4-kinase family. Expressed predominantly in liver. Also found in kidney, lung and lymphoid tissue. Down-regulated in BeF3 cells expressing the BCR-ABL oncogene p185.

It localises to the membrane. The enzyme catalyses a 1,2-diacyl-sn-glycero-3-phospho-(1D-myo-inositol 4-phosphate) + ATP = a 1,2-diacyl-sn-glycero-3-phospho-(1D-myo-inositol-3,4-bisphosphate) + ADP + H(+). It catalyses the reaction a 1,2-diacyl-sn-glycero-3-phospho-(1D-myo-inositol) + ATP = a 1,2-diacyl-sn-glycero-3-phospho-(1D-myo-inositol-3-phosphate) + ADP + H(+). Its function is as follows. Generates phosphatidylinositol 3-phosphate (PtdIns3P) and phosphatidylinositol 3,4-bisphosphate (PtdIns(3,4)P2) that act as second messengers. May play a role in SDF1A-stimulated chemotaxis. In Mus musculus (Mouse), this protein is Phosphatidylinositol 3-kinase C2 domain-containing subunit gamma (Pik3c2g).